Here is a 98-residue protein sequence, read N- to C-terminus: DNA-binding protein Fis (98 aa).

A DNA-binding region (H-T-H motif) is located at residues 74–93 (QTRAAQMMGINRGTLRKKLK).

It belongs to the transcriptional regulatory Fis family. As to quaternary structure, homodimer.

Functionally, activates ribosomal RNA transcription. Plays a direct role in upstream activation of rRNA promoters. This is DNA-binding protein Fis from Proteus hauseri.